A 30-amino-acid polypeptide reads, in one-letter code: Snake venom serine protease (30 aa).

The 30-residue stretch at 1–30 folds into the Peptidase S1 domain; the sequence is VIGGDECNINEHRFLVALYDPDGFLSGGIL.

Belongs to the peptidase S1 family. Snake venom subfamily. As to quaternary structure, monomer. Post-translationally, N-Glycosylated. Expressed by the venom gland.

The protein localises to the secreted. Its activity is regulated as follows. Inhibited by diisopropylfluorophosphate (DFP). Snake venom serine protease that catalyzes the hydrolysis of arginine esters, kallikrein substrates Pro-Phe-Arg-MCA and Z-Phe-Arg-MCA. Cleaves kininogen analogs to release bradykinin. Induces contraction of the isolated rat uterus directly at high concentrations, but provokes more forceful contractions when injected in presence of bovine plasma. Shows capillary permeability-increasing activity and hypotensive activity on the anesthetized rat. The sequence is that of Snake venom serine protease from Crotalus viridis viridis (Prairie rattlesnake).